The following is a 278-amino-acid chain: NAD-capped RNA hydrolase NudC (278 aa).

R84 contacts substrate. C114 and C117 together coordinate Zn(2+). Residue E127 participates in substrate binding. A Zn(2+)-binding site is contributed by C132. Position 140 (Y140) interacts with substrate. One can recognise a Nudix hydrolase domain in the interval 141-264; sequence PRISPSMIVL…SIARYLIEAY (124 aa). Residues A174, E190, and E194 each contribute to the a divalent metal cation site. Residues 175-196 carry the Nudix box motif; the sequence is GFVEPGESAEDCVHREVMEEVQ. 208 to 215 is a substrate binding site; that stretch reads QCWPFPHS. E235 is a binding site for a divalent metal cation. A257 provides a ligand contact to substrate.

Belongs to the Nudix hydrolase family. NudC subfamily. In terms of assembly, homodimer. Requires Mg(2+) as cofactor. It depends on Mn(2+) as a cofactor. The cofactor is Zn(2+).

The enzyme catalyses a 5'-end NAD(+)-phospho-ribonucleoside in mRNA + H2O = a 5'-end phospho-adenosine-phospho-ribonucleoside in mRNA + beta-nicotinamide D-ribonucleotide + 2 H(+). It catalyses the reaction NAD(+) + H2O = beta-nicotinamide D-ribonucleotide + AMP + 2 H(+). The catalysed reaction is NADH + H2O = reduced beta-nicotinamide D-ribonucleotide + AMP + 2 H(+). MRNA decapping enzyme that specifically removes the nicotinamide adenine dinucleotide (NAD) cap from a subset of mRNAs by hydrolyzing the diphosphate linkage to produce nicotinamide mononucleotide (NMN) and 5' monophosphate mRNA. The NAD-cap is present at the 5'-end of some mRNAs and stabilizes RNA against 5'-processing. Has preference for mRNAs with a 5'-end purine. Catalyzes the hydrolysis of a broad range of dinucleotide pyrophosphates. In Pseudomonas syringae pv. tomato (strain ATCC BAA-871 / DC3000), this protein is NAD-capped RNA hydrolase NudC.